We begin with the raw amino-acid sequence, 559 residues long: Formate--tetrahydrofolate ligase (559 aa).

68-75 (TPAGEGKS) contributes to the ATP binding site.

This sequence belongs to the formate--tetrahydrofolate ligase family.

It carries out the reaction (6S)-5,6,7,8-tetrahydrofolate + formate + ATP = (6R)-10-formyltetrahydrofolate + ADP + phosphate. It functions in the pathway one-carbon metabolism; tetrahydrofolate interconversion. The sequence is that of Formate--tetrahydrofolate ligase from Bacillus licheniformis (strain ATCC 14580 / DSM 13 / JCM 2505 / CCUG 7422 / NBRC 12200 / NCIMB 9375 / NCTC 10341 / NRRL NRS-1264 / Gibson 46).